Consider the following 375-residue polypeptide: Flagellar P-ring protein (375 aa).

An N-terminal signal peptide occupies residues 1-23; the sequence is MFNQSFLKYMLFGFFLFSFHAHA.

The protein belongs to the FlgI family. As to quaternary structure, the basal body constitutes a major portion of the flagellar organelle and consists of four rings (L,P,S, and M) mounted on a central rod.

It is found in the bacterial flagellum basal body. Assembles around the rod to form the L-ring and probably protects the motor/basal body from shearing forces during rotation. In Buchnera aphidicola subsp. Baizongia pistaciae (strain Bp), this protein is Flagellar P-ring protein.